The following is an 836-amino-acid chain: Sucrose synthase 5 (836 aa).

A GT-B glycosyltransferase region spans residues 270–748 (RIFNVVIFSV…GLQRINECYT (479 aa)). The disordered stretch occupies residues 805–836 (PPPLPPKPLVKPSASKGSKRTQPRLSFRLFGA).

The protein belongs to the glycosyltransferase 1 family. Plant sucrose synthase subfamily. Detected in the whole plant but more precisely confined to the vasculature in cotyledons, leaves, petals, anthers and roots. Also detected in developing siliques, young immature rosette and cauline leaves.

Its subcellular location is the secreted. It is found in the cell wall. It carries out the reaction an NDP-alpha-D-glucose + D-fructose = a ribonucleoside 5'-diphosphate + sucrose + H(+). Its function is as follows. Sucrose-cleaving enzyme that provides UDP-glucose and fructose for various metabolic pathways. Functions in callose synthesis at the site of phloem sieve elements. The protein is Sucrose synthase 5 (SUS5) of Arabidopsis thaliana (Mouse-ear cress).